The primary structure comprises 405 residues: Putative colanic acid polymerase (405 aa).

11 consecutive transmembrane segments (helical) span residues 5 to 25, 27 to 47, 55 to 75, 81 to 101, 117 to 137, 171 to 191, 204 to 224, 244 to 264, 282 to 302, 327 to 347, and 376 to 396; these read IRICSYLLLPLIYLLVNVKIA, LGESFPITIVTFLPVLLLLFL, LMIALGIGAGLTAFNYLFGQS, YVTSTMLFVYIVIIIGMVWSI, FFYLVVGLVVALAAVEMAQII, TALYFEPAFFALALISIWLSI, MILAGIILSGSFSGVMTFILF, PLALISLAVFLVGVVIAFPYI, IVGPLVMVGYSLTHIDGVVRF, GLYLLIIYFSWFAVFLSLWYM, and LFFTGSIFSPEYAFLIVCPFI.

It localises to the cell inner membrane. It participates in slime biogenesis; slime polysaccharide biosynthesis. The sequence is that of Putative colanic acid polymerase (wcaD) from Escherichia coli (strain K12).